Here is a 405-residue protein sequence, read N- to C-terminus: Argininosuccinate synthase (405 aa).

Residues 13-21 (AYSGGLDTS) and Ala40 each bind ATP. Positions 91 and 96 each coordinate L-citrulline. ATP is bound at residue Gly121. L-aspartate contacts are provided by Thr123, Asn127, and Asp128. Asn127 is a binding site for L-citrulline. Arg131, Ser182, Ser191, Glu267, and Tyr279 together coordinate L-citrulline.

The protein belongs to the argininosuccinate synthase family. Type 1 subfamily. In terms of assembly, homotetramer.

The protein localises to the cytoplasm. It catalyses the reaction L-citrulline + L-aspartate + ATP = 2-(N(omega)-L-arginino)succinate + AMP + diphosphate + H(+). It functions in the pathway amino-acid biosynthesis; L-arginine biosynthesis; L-arginine from L-ornithine and carbamoyl phosphate: step 2/3. The sequence is that of Argininosuccinate synthase from Rhizobium meliloti (strain 1021) (Ensifer meliloti).